We begin with the raw amino-acid sequence, 31 residues long: Cytochrome b6-f complex subunit 6 (31 aa).

Residues 4 to 24 form a helical membrane-spanning segment; it reads ITSYFGFLLAVLTITSALFIG.

Belongs to the PetL family. As to quaternary structure, the 4 large subunits of the cytochrome b6-f complex are cytochrome b6, subunit IV (17 kDa polypeptide, PetD), cytochrome f and the Rieske protein, while the 4 small subunits are PetG, PetL, PetM and PetN. The complex functions as a dimer.

Its subcellular location is the plastid. The protein resides in the chloroplast thylakoid membrane. Its function is as follows. Component of the cytochrome b6-f complex, which mediates electron transfer between photosystem II (PSII) and photosystem I (PSI), cyclic electron flow around PSI, and state transitions. PetL is important for photoautotrophic growth as well as for electron transfer efficiency and stability of the cytochrome b6-f complex. The sequence is that of Cytochrome b6-f complex subunit 6 from Cucumis sativus (Cucumber).